An 82-amino-acid chain; its full sequence is Neuropeptide-like peptide 36 (82 aa).

The polypeptide is Neuropeptide-like peptide 36 (nlp-36) (Caenorhabditis elegans).